Consider the following 528-residue polypeptide: Glucans biosynthesis protein G 2 (528 aa).

The signal sequence occupies residues 1-44 (MRLHLTFNHSTPATGRKNTKHTLFFGSMLACIISIISLVVPAYG).

This sequence belongs to the OpgD/OpgG family.

Its subcellular location is the periplasm. The protein operates within glycan metabolism; osmoregulated periplasmic glucan (OPG) biosynthesis. Involved in the biosynthesis of osmoregulated periplasmic glucans (OPGs). The sequence is that of Glucans biosynthesis protein G 2 (opgG2) from Shewanella oneidensis (strain ATCC 700550 / JCM 31522 / CIP 106686 / LMG 19005 / NCIMB 14063 / MR-1).